The following is a 64-amino-acid chain: Photosystem II reaction center protein J (64 aa).

A helical membrane pass occupies residues 35–55; that stretch reads LWLVATAGGIAVIFVLGIFFY.

Belongs to the PsbJ family. PSII is composed of 1 copy each of membrane proteins PsbA, PsbB, PsbC, PsbD, PsbE, PsbF, PsbH, PsbI, PsbJ, PsbK, PsbL, PsbM, PsbT, PsbX, PsbY, Psb30/Ycf12, peripheral proteins PsbO, CyanoQ (PsbQ), PsbU, PsbV and a large number of cofactors. It forms dimeric complexes.

It localises to the cellular thylakoid membrane. One of the components of the core complex of photosystem II (PSII). PSII is a light-driven water:plastoquinone oxidoreductase that uses light energy to abstract electrons from H(2)O, generating O(2) and a proton gradient subsequently used for ATP formation. It consists of a core antenna complex that captures photons, and an electron transfer chain that converts photonic excitation into a charge separation. The polypeptide is Photosystem II reaction center protein J (Prochlorococcus marinus (strain MIT 9515)).